Reading from the N-terminus, the 86-residue chain is Small ribosomal subunit protein uS17 (86 aa).

It belongs to the universal ribosomal protein uS17 family. Part of the 30S ribosomal subunit.

In terms of biological role, one of the primary rRNA binding proteins, it binds specifically to the 5'-end of 16S ribosomal RNA. The sequence is that of Small ribosomal subunit protein uS17 from Nitrosococcus oceani (strain ATCC 19707 / BCRC 17464 / JCM 30415 / NCIMB 11848 / C-107).